The chain runs to 146 residues: Hut operon positive regulatory protein (146 aa).

The protein belongs to the HutP family. In terms of assembly, homohexamer.

Antiterminator that binds to cis-acting regulatory sequences on the mRNA in the presence of histidine, thereby suppressing transcription termination and activating the hut operon for histidine utilization. The protein is Hut operon positive regulatory protein of Bacillus cereus (strain AH820).